Here is an 82-residue protein sequence, read N- to C-terminus: Sec-independent protein translocase protein TatA (82 aa).

The chain crosses the membrane as a helical span at residues 1–21 (MHPPSITQLLIILLIIVLLFG). The tract at residues 42-82 (AVKEDEEDNQSEENTKSQIKQSESKNENVSKTHTDSQKQDT) is disordered. A compositionally biased stretch (basic and acidic residues) spans 63-82 (SESKNENVSKTHTDSQKQDT).

It belongs to the TatA/E family. The Tat system comprises two distinct complexes: a TatABC complex, containing multiple copies of TatA, TatB and TatC subunits, and a separate TatA complex, containing only TatA subunits. Substrates initially bind to the TatABC complex, which probably triggers association of the separate TatA complex to form the active translocon.

The protein localises to the cell inner membrane. Its function is as follows. Part of the twin-arginine translocation (Tat) system that transports large folded proteins containing a characteristic twin-arginine motif in their signal peptide across membranes. TatA could form the protein-conducting channel of the Tat system. The protein is Sec-independent protein translocase protein TatA of Helicobacter hepaticus (strain ATCC 51449 / 3B1).